Here is a 558-residue protein sequence, read N- to C-terminus: C4b-binding protein alpha chain (558 aa).

The signal sequence occupies residues 1–13 (MSLTAALWVAVFG). Sushi domains follow at residues 14–74 (KCGP…ACVK), 75–136 (KSCR…ECVI), 137–201 (AKCG…TCER), 202–260 (IICP…VCEL), 261–326 (NSCT…GCKE), 327–388 (ICCP…SCHQ), 389–445 (SCDF…QCKA), and 446–503 (LCRK…RCEQ). 16 disulfides stabilise this stretch: C15–C60, C45–C72, C77–C118, C104–C134, C139–C182, C168–C199, C204–C246, C232–C258, C263–C312, C296–C324, C329–C373, C363–C386, C390–C431, C417–C443, C447–C488, and C474–C501. N-linked (GlcNAc...) asparagine glycosylation occurs at N31. N-linked (GlcNAc...) asparagine glycans are attached at residues N177 and N186. Residues N469 and N491 are each glycosylated (N-linked (GlcNAc...) asparagine).

Disulfide-linked complex of alpha and beta chains.

It is found in the secreted. Its function is as follows. Controls the classical pathway of complement activation. It binds as a cofactor to C3b/C4b inactivator (C3bINA), which then hydrolyzes the complement fragment C4b. It also accelerates the degradation of the C4bC2a complex (C3 convertase) by dissociating the complement fragment C2a. Alpha chain binds C4b. It also interacts with anticoagulant protein S and with serum amyloid P component. This is C4b-binding protein alpha chain (C4bpa) from Rattus norvegicus (Rat).